We begin with the raw amino-acid sequence, 570 residues long: MTLLWCVVSLYFYGILQSDASERCDDWGLDTMRQIQVFEDEPARIKCPLFEHFLKFNYSTAHSAGLTLIWYWTRQDRDLEEPINFRLPENRISKEKDVLWFRPTLLNDTGNYTCMLRNTTYCSKVAFPLEVVQKDSCFNSPMKLPVHKLYIEYGIQRITCPNVDGYFPSSVKPTITWYMGCYKIQNFNNVIPEGMNLSFLIALISNNGNYTCVVTYPENGRTFHLTRTLTVKVVGSPKNAVPPVIHSPNDHVVYEKEPGEELLIPCTVYFSFLMDSRNEVWWTIDGKKPDDITIDVTINESISHSRTEDETRTQILSIKKVTSEDLKRSYVCHARSAKGEVAKAAKVKQKVPAPRYTVELACGFGATVLLVVILIVVYHVYWLEMVLFYRAHFGTDETILDGKEYDIYVSYARNAEEEEFVLLTLRGVLENEFGYKLCIFDRDSLPGGIVTDETLSFIQKSRRLLVVLSPNYVLQGTQALLELKAGLENMASRGNINVILVQYKAVKETKVKELKRAKTVLTVIKWKGEKSKYPQGRFWKQLQVAMPVKKSPRRSSSDEQGLSYSSLKNV.

The signal sequence occupies residues 1–20; the sequence is MTLLWCVVSLYFYGILQSDA. Ig-like C2-type domains follow at residues 21–128, 141–230, and 242–348; these read SERC…VAFP, PMKL…RTLT, and PPVI…AKVK. Topologically, residues 21-367 are extracellular; the sequence is SERCDDWGLD…VELACGFGAT (347 aa). 5 cysteine pairs are disulfide-bonded: cysteine 24-cysteine 122, cysteine 47-cysteine 114, cysteine 137-cysteine 181, cysteine 160-cysteine 212, and cysteine 266-cysteine 332. Asparagine 57 is a glycosylation site (N-linked (GlcNAc...) asparagine). The tract at residues 69–85 is essential for interaction with PTPRD; it reads IWYWTRQDRDLEEPINF. Asparagine 107, asparagine 111, and asparagine 118 each carry an N-linked (GlcNAc...) asparagine glycan. Asparagine 196, asparagine 209, and asparagine 299 each carry an N-linked (GlcNAc...) asparagine glycan. Residues 368–388 form a helical membrane-spanning segment; it reads VLLVVILIVVYHVYWLEMVLF. Topologically, residues 389–570 are cytoplasmic; it reads YRAHFGTDET…GLSYSSLKNV (182 aa). Positions 403–546 constitute a TIR domain; that stretch reads KEYDIYVSYA…RFWKQLQVAM (144 aa). The active site involves glutamate 482. The segment at 549–570 is disordered; it reads KKSPRRSSSDEQGLSYSSLKNV. A Phosphoserine modification is found at serine 557. Over residues 558-570 the composition is skewed to polar residues; the sequence is DEQGLSYSSLKNV.

This sequence belongs to the interleukin-1 receptor family. The interleukin-36 receptor complex is a heterodimer of IL1RL2 and IL1RAP; the association is inhibited by IL36RN. The interleukin-1 receptor complex is a heterodimer of IL1R1 and IL1RAP. Associates with IL1R2 to form a non-signaling interleukin-1 receptor complex. Isoform 4 interacts with IL1R1 in an interleukin-1-dependent manner. Interacts with IL-33-bound IL1RL1 to form the minimal interleukin-33 signaling complex with a 1:1:1 stoichiometry. Interacts with KIT (independently of stimulation with KITLG/SCF). A mast cell-specific KITLG/SCF-induced interleukin-33 signaling complex contains IL1RL1, IL1RAP, KIT and MYD88. Interacts (via the first immunoglobilin domain) with PTPRD (via the third immunoglobilin domain); induces pre- and postsynaptic differentiation of neurons. As to expression, detected in liver, skin, placenta, thymus and lung. Isoform 4 is predominantly expressed in brain. Overexpressed on candidate chronic myeloid leukemia (CML) stem cells, hematopoietic stem cells and mononuclear cells of patients with acute myeloid leukemia (AML). Overexpressed in patients with chronic obstructive pulmonary disease (COPD). Expressed in T-helper 1 (Th1) and T-helper 2 (Th2) cell subsets.

It localises to the cell membrane. Its subcellular location is the secreted. The enzyme catalyses NAD(+) + H2O = ADP-D-ribose + nicotinamide + H(+). In terms of biological role, coreceptor for IL1RL2 in the IL-36 signaling system. Coreceptor with IL1R1 in the IL-1 signaling system. Associates with IL1R1 bound to IL1B to form the high affinity interleukin-1 receptor complex which mediates interleukin-1-dependent activation of NF-kappa-B and other pathways. Signaling involves the recruitment of adapter molecules such as TOLLIP, MYD88, and IRAK1 or IRAK2 via the respective TIR domains of the receptor/coreceptor subunits. Recruits TOLLIP to the signaling complex. Does not bind to interleukin-1 alone; binding of IL1RN to IL1R1, prevents its association with IL1R1 to form a signaling complex. The cellular response is modulated through a non-signaling association with the membrane IL1R2 decoy receptor. Coreceptor for IL1RL1 in the IL-33 signaling system. Can bidirectionally induce pre- and postsynaptic differentiation of neurons by trans-synaptically binding to PTPRD. May play a role in IL1B-mediated costimulation of IFNG production from T-helper 1 (Th1) cells. Associates with secreted ligand-bound IL1R2 and increases the affinity of secreted IL1R2 for IL1B; this complex formation may be the dominant mechanism for neutralization of IL1B by secreted/soluble receptors. Enhances the ability of secreted IL1R1 to inhibit IL-33 signaling. Its function is as follows. Unable to mediate canonical IL-1 signaling. Required for Src phosphorylation by IL1B. May be involved in IL1B-potentiated NMDA-induced calcium influx in neurons. This Homo sapiens (Human) protein is Interleukin-1 receptor accessory protein (IL1RAP).